The sequence spans 198 residues: Holliday junction branch migration complex subunit RuvA (198 aa).

Positions Met-1–Glu-64 are domain I. Residues Ser-65–Glu-143 are domain II. Residues Phe-144–Ala-154 are flexible linker. The tract at residues Ala-154 to Gly-198 is domain III.

The protein belongs to the RuvA family. In terms of assembly, homotetramer. Forms an RuvA(8)-RuvB(12)-Holliday junction (HJ) complex. HJ DNA is sandwiched between 2 RuvA tetramers; dsDNA enters through RuvA and exits via RuvB. An RuvB hexamer assembles on each DNA strand where it exits the tetramer. Each RuvB hexamer is contacted by two RuvA subunits (via domain III) on 2 adjacent RuvB subunits; this complex drives branch migration. In the full resolvosome a probable DNA-RuvA(4)-RuvB(12)-RuvC(2) complex forms which resolves the HJ.

The protein localises to the cytoplasm. The RuvA-RuvB-RuvC complex processes Holliday junction (HJ) DNA during genetic recombination and DNA repair, while the RuvA-RuvB complex plays an important role in the rescue of blocked DNA replication forks via replication fork reversal (RFR). RuvA specifically binds to HJ cruciform DNA, conferring on it an open structure. The RuvB hexamer acts as an ATP-dependent pump, pulling dsDNA into and through the RuvAB complex. HJ branch migration allows RuvC to scan DNA until it finds its consensus sequence, where it cleaves and resolves the cruciform DNA. This chain is Holliday junction branch migration complex subunit RuvA, found in Clostridium botulinum (strain Alaska E43 / Type E3).